An 856-amino-acid chain; its full sequence is Valine--tRNA ligase (856 aa).

Residues 47–57 (PTASGVLHIGH) carry the 'HIGH' region motif. The short motif at 578 to 582 (KMSKS) is the 'KMSKS' region element. K581 is an ATP binding site.

This sequence belongs to the class-I aminoacyl-tRNA synthetase family. ValS type 2 subfamily. As to quaternary structure, monomer.

Its subcellular location is the cytoplasm. It catalyses the reaction tRNA(Val) + L-valine + ATP = L-valyl-tRNA(Val) + AMP + diphosphate. In terms of biological role, catalyzes the attachment of valine to tRNA(Val). As ValRS can inadvertently accommodate and process structurally similar amino acids such as threonine, to avoid such errors, it has a 'posttransfer' editing activity that hydrolyzes mischarged Thr-tRNA(Val) in a tRNA-dependent manner. In Tropheryma whipplei (strain TW08/27) (Whipple's bacillus), this protein is Valine--tRNA ligase.